A 354-amino-acid chain; its full sequence is NADH-quinone oxidoreductase subunit H (354 aa).

Transmembrane regions (helical) follow at residues 22 to 42 (ILIRAVIIVVPLLLCVAYLIL), 91 to 111 (YLIAPLMVLMPAVAIWAVIPF), 124 to 144 (LLYVMAISSVGVYGVILAGWA), 168 to 188 (MGFALVTVLMVAGSLNLSAIV), 203 to 223 (ILSWNWLPLLPMFGVYFISGV), 255 to 275 (LFFLAEYINMIIISTMTALMF), 291 to 311 (IPGFFWLLIKVFLLLSVFIWI), and 326 to 346 (LGWKVFIPLTVAWLIIVAIWI).

It belongs to the complex I subunit 1 family. As to quaternary structure, NDH-1 is composed of 14 different subunits. Subunits NuoA, H, J, K, L, M, N constitute the membrane sector of the complex.

The protein resides in the cell inner membrane. The enzyme catalyses a quinone + NADH + 5 H(+)(in) = a quinol + NAD(+) + 4 H(+)(out). Its function is as follows. NDH-1 shuttles electrons from NADH, via FMN and iron-sulfur (Fe-S) centers, to quinones in the respiratory chain. The immediate electron acceptor for the enzyme in this species is believed to be ubiquinone. Couples the redox reaction to proton translocation (for every two electrons transferred, four hydrogen ions are translocated across the cytoplasmic membrane), and thus conserves the redox energy in a proton gradient. This subunit may bind ubiquinone. This Cupriavidus taiwanensis (strain DSM 17343 / BCRC 17206 / CCUG 44338 / CIP 107171 / LMG 19424 / R1) (Ralstonia taiwanensis (strain LMG 19424)) protein is NADH-quinone oxidoreductase subunit H.